The following is a 101-amino-acid chain: Small ribosomal subunit protein eS24 (101 aa).

This sequence belongs to the eukaryotic ribosomal protein eS24 family.

This is Small ribosomal subunit protein eS24 from Methanosarcina mazei (strain ATCC BAA-159 / DSM 3647 / Goe1 / Go1 / JCM 11833 / OCM 88) (Methanosarcina frisia).